The chain runs to 496 residues: UDP-N-acetylmuramate--L-alanine ligase (496 aa).

122–128 provides a ligand contact to ATP; that stretch reads GTHGKTT.

Belongs to the MurCDEF family.

The protein resides in the cytoplasm. The catalysed reaction is UDP-N-acetyl-alpha-D-muramate + L-alanine + ATP = UDP-N-acetyl-alpha-D-muramoyl-L-alanine + ADP + phosphate + H(+). It participates in cell wall biogenesis; peptidoglycan biosynthesis. In terms of biological role, cell wall formation. The chain is UDP-N-acetylmuramate--L-alanine ligase from Mycolicibacterium paratuberculosis (strain ATCC BAA-968 / K-10) (Mycobacterium paratuberculosis).